The following is a 337-amino-acid chain: MIQKNWQELIKPNKVEFSKHDNPNISSVIVEPLERGFGLTLGNALRRVLLSSLRGAAITAVQIDGVLHEFSSIPGVREDVTDIILNIKEIALRMREEGPKRIVVCKEGPGVLRAGDISTVGDMEILNPDHVICTLDEDAEIRMEFIVNTGKGYVPSDRNCIDDARIGLIPVDSLYSPIRKVSYKVENTREGQVLDYDKLTLTVETNGAVNGEDALAFAARILQDQLALFINFKEPEKPTVEESNSELAFNPALLKKVDELELSVRSANCLKNDNIVYIGDLIQKTESEMLRTPNFGRKSLNEIKEVLACMGLHLGMEVPTWPPENIDDLAKRYEDQY.

Residues 1–233 (MIQKNWQELI…DQLALFINFK (233 aa)) form an alpha N-terminal domain (alpha-NTD) region. Residues 249 to 337 (FNPALLKKVD…DLAKRYEDQY (89 aa)) are alpha C-terminal domain (alpha-CTD).

It belongs to the RNA polymerase alpha chain family. In terms of assembly, homodimer. The RNAP catalytic core consists of 2 alpha, 1 beta, 1 beta' and 1 omega subunit. When a sigma factor is associated with the core the holoenzyme is formed, which can initiate transcription.

It catalyses the reaction RNA(n) + a ribonucleoside 5'-triphosphate = RNA(n+1) + diphosphate. In terms of biological role, DNA-dependent RNA polymerase catalyzes the transcription of DNA into RNA using the four ribonucleoside triphosphates as substrates. This is DNA-directed RNA polymerase subunit alpha from Bartonella henselae (strain ATCC 49882 / DSM 28221 / CCUG 30454 / Houston 1) (Rochalimaea henselae).